The primary structure comprises 578 residues: Arginine--tRNA ligase (578 aa).

The 'HIGH' region signature appears at 123-133 (PNIAKEMHVGH).

The protein belongs to the class-I aminoacyl-tRNA synthetase family. In terms of assembly, monomer.

Its subcellular location is the cytoplasm. It catalyses the reaction tRNA(Arg) + L-arginine + ATP = L-arginyl-tRNA(Arg) + AMP + diphosphate. This Baumannia cicadellinicola subsp. Homalodisca coagulata protein is Arginine--tRNA ligase.